The sequence spans 359 residues: Lachesin (359 aa).

An N-terminal signal peptide occupies residues 1-25 (MWRPSISNCVWSTLLLAIFVQQTLA). The Ig-like V-type domain maps to 29 to 130 (PTISYITQEQ…HKVSAEVKLS (102 aa)). A disulfide bond links Cys-50 and Cys-113. 2 N-linked (GlcNAc...) asparagine glycosylation sites follow: Asn-92 and Asn-140. Ig-like C2-type domains are found at residues 135 to 221 (PVIS…INVE) and 226 to 317 (PVIT…ARVN). 2 disulfide bridges follow: Cys-157-Cys-204 and Cys-247-Cys-303. Residue Ala-336 is the site of GPI-anchor amidated alanine attachment. The propeptide at 337–359 (GAEDVSATSFALVGILAALLFAR) is removed in mature form.

Expressed on differentiating neuronal cells from the onset of neurogenesis in both the central and peripheral nervous systems. First detected in the cellularized blastoderm, apart from in the ventral side. Expression persists uniformly in the early ectoderm until the end of gastrulation. From stage 10, expressed in an alternating strong/weak pattern in each segment until stage 15 when it disappears. From stage 11, expressed in subsets of neurons and later subsets of glial cells. From early stage 13, strongly expressed in trachea, hindgut, foregut and the nervous system.

Its subcellular location is the cell membrane. Required for normal tracheal development and maintenance of the trans-epithelial diffusion barrier. Functions as a homophilic cell-adhesion molecule. May play a role in early neuronal differentiation and axon outgrowth. This Drosophila melanogaster (Fruit fly) protein is Lachesin (Lac).